A 255-amino-acid chain; its full sequence is Gene 54 protein (255 aa).

The polypeptide is Gene 54 protein (54) (Mycobacterium phage D29 (Mycobacteriophage D29)).